The primary structure comprises 70 residues: Ubiquinol-cytochrome c reductase complex assembly factor 5 (70 aa).

Topologically, residues 1–19 (MFTRAQVRRILQRVPGKQR) are mitochondrial matrix. A helical transmembrane segment spans residues 20-41 (FGIYRFLPFFFVLGGTMEWIMI). Residues 42–70 (KVRVGQETFYDVYRRKASERQYQRRLEDE) lie on the Mitochondrial intermembrane side of the membrane.

The protein belongs to the UQCC5 family. Associates with the mitochondrial ribosome. Interacts with UQCC6. Interacts with MT-CYB; interacts with newly synthesizes MT-CYB. Forms a complex, named COMB/coordinator of mitochondrial CYTB biogenesis, composed of UQCC1, UQCC2, UQCC4, UQCC5 and UQCC6; regulates MT-CYB synthesis and promotes its membrane insertion.

It localises to the mitochondrion inner membrane. Functionally, required for the assembly and stability of the mitochondrial ubiquinol-cytochrome c reductase complex (complex III (CIII) or cytochrome b-c1 complex), a multisubunit transmembrane complex that is part of the mitochondrial electron transport chain (ETC) which drives oxidative phosphorylation. Mediates early complex III biogenesis. Participates in regulating the levels of electron transport chain proteins, and therefore energy supply, in response to changes in energy demand. Also involved in the first steps of cytochrome c oxidase complex (complex IV) assembly. This is Ubiquinol-cytochrome c reductase complex assembly factor 5 from Homo sapiens (Human).